The primary structure comprises 367 residues: Cystinosin (367 aa).

The signal sequence occupies residues 1–22 (MIRRWLVIFILFPLQLIEKCES). Residues 23 to 125 (TVDFSVPPIV…LVIHSNIVSI (103 aa)) lie on the Lumenal side of the membrane. 5 N-linked (GlcNAc...) asparagine glycosylation sites follow: asparagine 51, asparagine 66, asparagine 84, asparagine 104, and asparagine 107. Residues 123–189 (VSIINQVIGW…LFWVPSIKEQ (67 aa)) form the PQ-loop 1 domain. The chain crosses the membrane as a helical span at residues 126-150 (INQVIGWIYFVAWSVSFYPQVITNW). The Cytoplasmic portion of the chain corresponds to 151-159 (RRKSVVGLS). Residues 160–179 (FDFVVLNLMGFVAYSVFNIG) form a helical membrane-spanning segment. Asparagine 166 contributes to the L-cystine binding site. Residues 180–202 (LFWVPSIKEQFLLKYPNGVNPVD) are Lumenal-facing. Residues 203-225 (SNDVFFSLHAVALTLVVIVQCLL) traverse the membrane as a helical segment. Aspartate 205 lines the H(+) pocket. Topologically, residues 226–234 (YERGSQRVS) are cytoplasmic. A helical transmembrane segment spans residues 235–257 (WLAISFLVLSWLFTLIALIMAAV). Residues 258–263 (GATTWL) are Lumenal-facing. Positions 263–328 (LQFLFCFSYI…QSYNNDQWTL (66 aa)) constitute a PQ-loop 2 domain. The helical transmembrane segment at 264-289 (QFLFCFSYIKLAVTLVKYFPQAYMNF) threads the bilayer. Positions 273, 280, and 281 each coordinate L-cystine. At 290 to 298 (HYKSTEGWS) the chain is on the cytoplasmic side. Residues 299–308 (IGNVLLDFTG) traverse the membrane as a helical segment. L-cystine contacts are provided by asparagine 301 and aspartate 305. Aspartate 305 lines the H(+) pocket. The Lumenal segment spans residues 309-331 (GSFSLLQMFLQSYNNDQWTLIFG). A helical membrane pass occupies residues 332–354 (DPTKFGLGIFSIIFDVVFFIQHF). Aspartate 346 serves as a coordination point for H(+). The Cytoplasmic segment spans residues 355–367 (CLYRKKPGYDQLN). The short motif at 362 to 366 (GYDQL) is the Lysosomal targeting motif element.

The protein belongs to the cystinosin family. In terms of assembly, interacts with components of the V-ATPase complex. Interacts with components of the Ragulator complex. Interacts with RRAGA/RagA and RRAGC/RagC. Interacts with AP-3 complex subunit mu (AP3M1 or AP3M2).

It is found in the lysosome membrane. The protein localises to the melanosome membrane. It carries out the reaction L-cystine(out) + H(+)(out) = L-cystine(in) + H(+)(in). Its activity is regulated as follows. Switches between a lumen- and a cytosol-open conformation: pH induces conformational changes and shifts the equilibrium to facilitate the transition between the lumen- and cytosol-open conformation, thereby promoting cystine transport. Protonation of specific aspartate residues (Asp-205, Asp-305 and Asp-346) favors the cytosol-open conformation. Cystine/H(+) symporter that mediates export of cystine, the oxidized dimer of cysteine, from lysosomes. Plays an important role in melanin synthesis by catalyzing cystine export from melanosomes, possibly by inhibiting pheomelanin synthesis. In addition to cystine export, also acts as a positive regulator of mTORC1 signaling in kidney proximal tubular cells, via interactions with components of the v-ATPase and Ragulator complexes. Also involved in small GTPase-regulated vesicle trafficking and lysosomal localization of LAMP2A, independently of cystine transporter activity. The chain is Cystinosin from Bos taurus (Bovine).